The primary structure comprises 334 residues: Ornithine carbamoyltransferase, catabolic (334 aa).

Carbamoyl phosphate contacts are provided by residues 57–60 (STRT), Q84, R108, and 135–138 (HPTQ). L-ornithine-binding positions include N168, D232, and 236–237 (SM). Carbamoyl phosphate contacts are provided by residues 274–275 (CL) and R321.

The protein belongs to the aspartate/ornithine carbamoyltransferase superfamily. OTCase family.

It localises to the cytoplasm. It carries out the reaction carbamoyl phosphate + L-ornithine = L-citrulline + phosphate + H(+). It participates in amino-acid degradation; L-arginine degradation via ADI pathway; carbamoyl phosphate from L-arginine: step 2/2. Its function is as follows. Reversibly catalyzes the transfer of the carbamoyl group from carbamoyl phosphate (CP) to the N(epsilon) atom of ornithine (ORN) to produce L-citrulline. In Haemophilus influenzae (strain ATCC 51907 / DSM 11121 / KW20 / Rd), this protein is Ornithine carbamoyltransferase, catabolic (arcB).